A 711-amino-acid polypeptide reads, in one-letter code: Myb-like protein B (711 aa).

The span at 24–50 (QPQQSIQQQQQQQQQQQQQQQQQQQQQ) shows a compositional bias: low complexity. Disordered stretches follow at residues 24-70 (QPQQ…SPQL) and 113-235 (NYHT…IINN). 2 stretches are compositionally biased toward polar residues: residues 113–139 (NYHT…SPPT) and 148–157 (TPLSSSTGFS). 2 stretches are compositionally biased toward low complexity: residues 158-187 (NNNN…NNNI) and 198-235 (NNYP…IINN). HTH myb-type domains follow at residues 428–490 (RESI…SPEI) and 491–542 (KKGS…SRQT). 2 DNA-binding regions (H-T-H motif) span residues 462 to 486 (WKKI…KRVL) and 514 to 538 (WKNV…KAIM). Positions 540-598 (RQTEWNQLEDDILTKKIKLMTQNNEKISFQQVSKHLARAKTTKIPRTALECKSRWSQLN) constitute a Myb-like domain. The segment at 598-640 (NSTNVNNNNNNNNNSITTSSSNTNQQQQSTMVTPTSSPLSSPI) is disordered.

Its subcellular location is the nucleus. In terms of biological role, transcriptional activator that initiates multicellular development by induction of adenylyl cyclase expression. This chain is Myb-like protein B (mybB), found in Dictyostelium discoideum (Social amoeba).